The following is a 351-amino-acid chain: D-threonate 4-phosphate dehydrogenase (351 aa).

Substrate contacts are provided by His-147 and Thr-148. Residues His-177, His-221, and His-276 each coordinate a divalent metal cation. Substrate is bound by residues Lys-284, Asn-293, and Arg-302.

It belongs to the PdxA family. PdxA2 subfamily. As to quaternary structure, homodimer. A divalent metal cation is required as a cofactor.

It catalyses the reaction 4-O-phospho-D-threonate + NAD(+) = dihydroxyacetone phosphate + CO2 + NADH. Its function is as follows. Catalyzes the NAD-dependent oxidation and subsequent decarboxylation of D-threonate 4-phosphate to produce dihydroxyacetone phosphate (DHAP). Can also use 4-hydroxy-L-threonine 4-phosphate as substrate. The polypeptide is D-threonate 4-phosphate dehydrogenase (Bordetella bronchiseptica (strain ATCC BAA-588 / NCTC 13252 / RB50) (Alcaligenes bronchisepticus)).